The sequence spans 43 residues: uncharacterized protein (43 aa).

This is an uncharacterized protein from Schizosaccharomyces pombe (strain 972 / ATCC 24843) (Fission yeast).